We begin with the raw amino-acid sequence, 61 residues long: Metallothionein-2 (61 aa).

Position 1 is an N-acetylmethionine (M1). Residues 1 to 29 are beta; sequence MDPNCSCASDGSCSCAGACKCKQCKCTSC. Residues C5, C7, C13, C15, C19, C21, C24, C26, C29, C33, C34, C36, C37, C41, C44, C48, C50, and C57 each coordinate a divalent metal cation. The alpha stretch occupies residues 30–61; sequence KKSCCSCCPVGCAKCSQGCICKEASDKCSCCA. S58 is modified (phosphoserine). Residues C59 and C60 each coordinate a divalent metal cation.

Belongs to the metallothionein superfamily. Type 1 family.

In terms of biological role, metallothioneins have a high content of cysteine residues that bind various heavy metals; these proteins are transcriptionally regulated by both heavy metals and glucocorticoids. In Mus musculus (Mouse), this protein is Metallothionein-2 (Mt2).